Here is a 720-residue protein sequence, read N- to C-terminus: Fatty acid CoA ligase Acsl3 (720 aa).

A helical; Signal-anchor for type III membrane protein transmembrane segment spans residues 21–41 (ILLYFIHFIISLYTILTYIPF). Over 42-720 (YFLCESKQEK…ADIERMYGRK (679 aa)) the chain is Cytoplasmic. Position 683 is a phosphoserine (S683).

This sequence belongs to the ATP-dependent AMP-binding enzyme family. Mg(2+) serves as cofactor. Predominantly expressed in the brain, and to a much lesser extent, in lung, adrenal gland, kidney, small intestine, and adipose tissue but not detected in heart or liver.

The protein localises to the mitochondrion outer membrane. The protein resides in the peroxisome membrane. Its subcellular location is the microsome membrane. It localises to the endoplasmic reticulum membrane. The catalysed reaction is a long-chain fatty acid + ATP + CoA = a long-chain fatty acyl-CoA + AMP + diphosphate. The enzyme catalyses (5Z,8Z,11Z,14Z)-eicosatetraenoate + ATP + CoA = (5Z,8Z,11Z,14Z)-eicosatetraenoyl-CoA + AMP + diphosphate. It carries out the reaction a medium-chain fatty acid + ATP + CoA = a medium-chain fatty acyl-CoA + AMP + diphosphate. It catalyses the reaction 15-hydroxy-(5Z,8Z,11Z,13E)-eicosatetraenoate + ATP + CoA = 15-hydroxy-(5Z,8Z,11Z,13E)-eicosatetraenoyl-CoA + AMP + diphosphate. The catalysed reaction is 12-hydroxy-(5Z,8Z,10E,14Z)-eicosatetraenoate + ATP + CoA = 12-hydroxy-(5Z,8Z,10E,14Z)-eicosatetraenoyl-CoA + AMP + diphosphate. The enzyme catalyses 5-hydroxy-(6E,8Z,11Z,14Z)-eicosatetraenoate + ATP + CoA = 5-hydroxy-(6E,8Z,11Z,14Z)-eicosatetraenoyl-CoA + AMP + diphosphate. It carries out the reaction 14,15-epoxy-(5Z,8Z,11Z)-eicosatrienoate + ATP + CoA = 14,15-epoxy-(5Z,8Z,11Z)-eicosatrienoyl-CoA + AMP + diphosphate. It catalyses the reaction 11,12-epoxy-(5Z,8Z,14Z)-eicosatrienoate + ATP + CoA = 11,12-epoxy-(5Z,8Z,14Z)-eicosatrienoyl-CoA + AMP + diphosphate. The catalysed reaction is (E)-hexadec-2-enoate + ATP + CoA = (2E)-hexadecenoyl-CoA + AMP + diphosphate. The enzyme catalyses hexadecanoate + ATP + CoA = hexadecanoyl-CoA + AMP + diphosphate. It carries out the reaction tetradecanoate + ATP + CoA = tetradecanoyl-CoA + AMP + diphosphate. It catalyses the reaction dodecanoate + ATP + CoA = dodecanoyl-CoA + AMP + diphosphate. The catalysed reaction is octadecanoate + ATP + CoA = octadecanoyl-CoA + AMP + diphosphate. The enzyme catalyses eicosanoate + ATP + CoA = eicosanoyl-CoA + AMP + diphosphate. It carries out the reaction (9Z)-octadecenoate + ATP + CoA = (9Z)-octadecenoyl-CoA + AMP + diphosphate. It catalyses the reaction (9Z)-hexadecenoate + ATP + CoA = (9Z)-hexadecenoyl-CoA + AMP + diphosphate. The catalysed reaction is (9Z,12Z)-octadecadienoate + ATP + CoA = (9Z,12Z)-octadecadienoyl-CoA + AMP + diphosphate. The enzyme catalyses (9Z,12Z,15Z)-octadecatrienoate + ATP + CoA = (9Z,12Z,15Z)-octadecatrienoyl-CoA + AMP + diphosphate. It carries out the reaction (4Z,7Z,10Z,13Z,16Z,19Z)-docosahexaenoate + ATP + CoA = (4Z,7Z,10Z,13Z,16Z,19Z)-docosahexaenoyl-CoA + AMP + diphosphate. It catalyses the reaction (5Z,8Z,11Z,14Z,17Z)-eicosapentaenoate + ATP + CoA = (5Z,8Z,11Z,14Z,17Z)-eicosapentaenoyl-CoA + AMP + diphosphate. The catalysed reaction is a fatty acid + ATP + CoA = a fatty acyl-CoA + AMP + diphosphate. Functionally, catalyzes the conversion of long-chain fatty acids to their active form acyl-CoA for both synthesis of cellular lipids, and degradation via beta-oxidation. ACSL3 is required for the incorporation of fatty acids into phosphatidylcholine, the major phospholipid located on the surface of VLDL (very low density lipoproteins). Has mainly an anabolic role in energy metabolism. Mediates hepatic lipogenesis. Preferentially uses myristate, laurate, arachidonate and eicosapentaenoate as substrates. Both isoforms exhibit the same level of activity. The chain is Fatty acid CoA ligase Acsl3 from Rattus norvegicus (Rat).